The following is a 396-amino-acid chain: Phosphoglycerate kinase (396 aa).

Substrate contacts are provided by residues 21–23, Arg36, 59–62, Arg118, and Arg151; these read DFN and HLGR. Residues Lys201, Gly292, Glu323, and 349-352 contribute to the ATP site; that span reads GGDS.

This sequence belongs to the phosphoglycerate kinase family. Monomer.

The protein localises to the cytoplasm. It catalyses the reaction (2R)-3-phosphoglycerate + ATP = (2R)-3-phospho-glyceroyl phosphate + ADP. Its pathway is carbohydrate degradation; glycolysis; pyruvate from D-glyceraldehyde 3-phosphate: step 2/5. The protein is Phosphoglycerate kinase of Leptospira borgpetersenii serovar Hardjo-bovis (strain L550).